Here is a 602-residue protein sequence, read N- to C-terminus: UvrABC system protein C (602 aa).

Positions 15 to 100 (DQSGVYHYFD…IKQLKPKYNI (86 aa)) constitute a GIY-YIG domain. The UVR domain occupies 206 to 241 (SKLISRLKERMEKLAENLRFEEAGELRDRIEKIKRI).

It belongs to the UvrC family. In terms of assembly, interacts with UvrB in an incision complex.

The protein resides in the cytoplasm. Functionally, the UvrABC repair system catalyzes the recognition and processing of DNA lesions. UvrC both incises the 5' and 3' sides of the lesion. The N-terminal half is responsible for the 3' incision and the C-terminal half is responsible for the 5' incision. This chain is UvrABC system protein C, found in Wolinella succinogenes (strain ATCC 29543 / DSM 1740 / CCUG 13145 / JCM 31913 / LMG 7466 / NCTC 11488 / FDC 602W) (Vibrio succinogenes).